A 301-amino-acid polypeptide reads, in one-letter code: MPIIIDKDLPARKVLQEENIFVMTKERAETQDIRALKIAILNLMPTKQETEAQLLRLIGNTPLQLDVHLLHMESHLSRNVAQEHLTSFYKTFRDIENEKFDGLIITGAPVETLSFEEVDYWEELKRIMEYSKTNVTSTLHICWGAQAGLYHHYGVPKYPLKEKMFGVFEHEVREQHVKLLQGFDELFFAPHSRHTEVRENDIRGVKELTLLANSEEAGVHLVIGPEGRQVFALGHSEYSCDTLKQEYERDRQKGLNIDVPKNYFKHNNPNEKPLVRWRSHGNLLFSNWLNYYVYQETPYVL.

Cys142 acts as the Acyl-thioester intermediate in catalysis. Substrate is bound by residues Lys163 and Ser192. The active-site Proton acceptor is His235. The active site involves Glu237. Arg249 contributes to the substrate binding site.

The protein belongs to the MetA family.

The protein localises to the cytoplasm. The enzyme catalyses L-homoserine + acetyl-CoA = O-acetyl-L-homoserine + CoA. Its pathway is amino-acid biosynthesis; L-methionine biosynthesis via de novo pathway; O-acetyl-L-homoserine from L-homoserine: step 1/1. Functionally, transfers an acetyl group from acetyl-CoA to L-homoserine, forming acetyl-L-homoserine. The chain is Homoserine O-acetyltransferase from Bacillus cereus (strain 03BB102).